We begin with the raw amino-acid sequence, 414 residues long: Tryptophan synthase beta chain (414 aa).

Residues 1-26 (MVSTFSRKDQNYKNDDLNQPSKEGRF) are compositionally biased toward basic and acidic residues. A disordered region spans residues 1-27 (MVSTFSRKDQNYKNDDLNQPSKEGRFG). Lysine 109 carries the post-translational modification N6-(pyridoxal phosphate)lysine.

It belongs to the TrpB family. In terms of assembly, tetramer of two alpha and two beta chains. The cofactor is pyridoxal 5'-phosphate.

It carries out the reaction (1S,2R)-1-C-(indol-3-yl)glycerol 3-phosphate + L-serine = D-glyceraldehyde 3-phosphate + L-tryptophan + H2O. It functions in the pathway amino-acid biosynthesis; L-tryptophan biosynthesis; L-tryptophan from chorismate: step 5/5. In terms of biological role, the beta subunit is responsible for the synthesis of L-tryptophan from indole and L-serine. This is Tryptophan synthase beta chain from Prochlorococcus marinus (strain MIT 9301).